The chain runs to 1401 residues: MSDLLGILKQQGQSEEFDAIKIALASPELIRSWSYGEVKKPETINYRTFKPERDGLFCAKTFGPVKDYECLCGKYKRLKHRGVICEKCGVELALAKVRRERMGHIELASPVAHIWFLKSLPSRIGLLLDMTLRDIERVLYFEAFVVVDPGMTELERGQLLNDEAYLDAMEQYGDEFDARMGAEAIRDLLRQIDLEDEIRNLREELPTTNSETKIKKITKRLKLLEAFYESGNKPEWMIMDVLPVLPPDLRPLVPLDGGRFATSDLNDLYRRVINRNNRLKRLLDLNAPDIIVRNEKRMLQESVDALLDNGRRGRAITGTNKRPLKSLADMIKGKQGRFRQNLLGKRVDYSGRSVIVVGPTLKLHQCGLPKKMALELFKPFIFSKLEFRGLATTIKAAKKMVEREESVVWDILDDVIREHPILLNRAPTLHRLGIQAFEPVLIEGKAIQLHPLVCTAYNADFDGDQMAVHVPLTLEAQLEARSLMMSTNNILSPASGEPIIVPSQDVVLGLYYLTREKVNALGEGKIYSSAQEAQNFYEAGHLDIHAKIKIRMPKEDGETGYHLVETTVGRAILAEILPKGMPFDYINRTMTKKVISKVIDSCYRKFGLKETVIFADQLMYTGFKYATRSGASIGIEDMEIPDDKASIIEHADNEVREIESQFRSGLVTNGERYNKVIDIWSRTNELVAKSMMSKIATEEVADAKGNKVRQESFNPIFMMADSGARGSAAQIRQLAGMRGLMAAPDGSIIETPITANFREGLNVFQYFISTHGARKGLADTALKTANSGYLTRRLVDVAQDVVITEDDCGTDTGILMQPLIEGGDIVEPLHERVLGRVVASDVYIPTQTEPVVKAGTLLDEEWVEKLEKHGVDQVMVRSPITCQTRFGLCAKCYGRDLARGHLVNTGEAVGIIAAQSIGEPGTQLTMRTFHIGGAASRATAANNIQIKTKGVIRLHNIKTVTHENKNLVAVSRSGEVTIVDEFGRERERYKVPYGAVISAQDNSPVEAGQVIATWDPHTHPVISEVSGRLKFVDLIDGITMNRQTDELTGLSNIVIIDAKQRSAAGRDLRPMVKLVTDEGDDIYLAGTNVPAQYYLPVDAIVNFEDRSLVGIGDVIARIPQERSKTRDITGGLPRVADLFEARKPKDSAVMAEVSGLVNFGKETKGKRRLIINVSEDQCHEELIPKWRHISVFEGEHVERGEIIAEGALNPHDILRLLGVGALANYIVNEVQDVYRLQGVKINDKHIEVIVRQMLRKRVITFAGDSKFLVGEQVEESAMLQENDKLLAEGKQIARGTPILLGITKASLATESFISAASFQETTRVLTEAAVSGKVDELRGLKENVMVGRLIPAGTGYTYHQSRKAKRARVAAGGDSSATHTVTASDVEHALSEALNADNHEH.

Zn(2+)-binding residues include Cys70, Cys72, Cys85, and Cys88. Mg(2+) contacts are provided by Asp460, Asp462, and Asp464. 4 residues coordinate Zn(2+): Cys808, Cys882, Cys889, and Cys892.

The protein belongs to the RNA polymerase beta' chain family. In terms of assembly, the RNAP catalytic core consists of 2 alpha, 1 beta, 1 beta' and 1 omega subunit. When a sigma factor is associated with the core the holoenzyme is formed, which can initiate transcription. It depends on Mg(2+) as a cofactor. The cofactor is Zn(2+).

It carries out the reaction RNA(n) + a ribonucleoside 5'-triphosphate = RNA(n+1) + diphosphate. DNA-dependent RNA polymerase catalyzes the transcription of DNA into RNA using the four ribonucleoside triphosphates as substrates. The chain is DNA-directed RNA polymerase subunit beta' from Legionella pneumophila (strain Lens).